We begin with the raw amino-acid sequence, 1418 residues long: MPKEDDSLCKIVVRREPLDVLLPYYDASETTVQKILHENDSTLSVKFLAGVEALIKKDELDKYKNGKACLRVWLKHKSRKRYHGYMTSTDKDEEEKNDYLLKSNGSKVLRDSTRTKKFKFGKEFHCALNPSFVSDETASDSATSSSSDTNKKVNRKEHNELSLSHLSFNDTSDFGSSDLSSSEIESTENDNKAPYFSLLYSDGFDFIKFLHVCVCVKCHGREHRSSGKNFVYCDHCSNVYHYDCSPLPSLNKETRNYSQQNGFICPLCSKNSKDVLCNTGFVSGVSSGQDLVIPPSLADRESLSILVNYCKSIRFRCFRCRRVEYFFYLDSNPLSIQRTITHFIKKLVCNECSMHPCDIEEIIAWRTLNSLYPSKATLSNNFVSTSDLSFWSREYFVRSKGKSYLHCFWCSASWLAGISLAKKKNFDGLENASYDATKPIIPVSYTIIDKVWDVQYRSGKNARTAKYKTKKHQLKAISEVTFAFVSWRGLTYYMSNWEPPPKETDRNRWKAWLKGYSDLLECLWIEKAPTASINIDLPFTNLEWHSQPSFIKGGTLMPYQLKGLNWLYLRWYTHHPCILADEMGLGKTVQVISFISVLFYRHKCFPVLVIVPHATVANWERELKKWAPFLQINVLVGSEKNRSLVRDYRLINQKDPKHVSTHVLVISASNVEREISLLRKFQWKVLIVDEGQRLKNDQSSLFYYLSSVKSDFKLLLTGTPLQNNVRELFNLLQFLNPMKINAAELEKRYSIIDTEKVTELHQILKPFFLRRVKSEVLDNFPTKVEVIIPLSMTPVQKGLYKSILSKNLSLLRNITGYANTSSSGGQRTTSLNNILMQLRKTLAHPYIYSPDIEDRNLPYELAMRSLEEASCKFLILRLLVPKLITRGHRILLFSQFIQQLDILEDWFEYKNIAYARFDGASSEMERQSAIDSFNAPNSELSCFLLSTRAGGVGINLASADTVIILDPDFNPHQDMQAIARAHRYGQKKKVLVFVLTTRDSVEEKIIQNAQKKLVLDHLIVESLDQNHNSEKDLESILRHGARALFEEAGDEPSIKYNEYSVELLISEAEKQEDTSTDESDIKSNKFGFFRVWDNKHISSNHYEVKENVLVDEEDVWSVILKQREKDAMLEKTDETTSNRRLRAHHKIHYGEDLNIYDNSDDTDYTVNDRSSPGSPFPIETETISSITDTLSDKQKLKYDSSVNIENLNDESDSQKSADVHFDSILAKSLLATTPKEDEFNKTLSTINLEVANKLTSSEYINDSEMQLIDDPVFYPPYEIIEKNHQLVGRSLSKAVLDNFFLLSSLSDNVRCRCCGIKHLPAHCPLSIVPLEICFLCGTPHFSGRDTCPMLRNKEAIYRLKDSLSKSREPFHIKKQAMARLNSFLQKKEEPTVSSSAKTNELSSKVIIKESIINEAKTL.

The segment covering 135-148 has biased composition (low complexity); the sequence is DETASDSATSSSSD. The disordered stretch occupies residues 135–156; the sequence is DETASDSATSSSSDTNKKVNRK. The PHD-type zinc finger occupies 212–271; that stretch reads VCVCVKCHGREHRSSGKNFVYCDHCSNVYHYDCSPLPSLNKETRNYSQQNGFICPLCSKN. Residues 215 to 269 form an RING-type; atypical zinc finger; the sequence is CVKCHGREHRSSGKNFVYCDHCSNVYHYDCSPLPSLNKETRNYSQQNGFICPLCS. Residues 568 to 738 form the Helicase ATP-binding domain; sequence YLRWYTHHPC…FNLLQFLNPM (171 aa). 581 to 588 lines the ATP pocket; it reads DEMGLGKT. In terms of domain architecture, Helicase C-terminal spans 875–1034; sequence ILRLLVPKLI…QNHNSEKDLE (160 aa).

Belongs to the SNF2/RAD54 helicase family. As to quaternary structure, interacts with clr3.

The protein localises to the nucleus. The protein resides in the chromosome. It is found in the centromere. Its subcellular location is the telomere. Required for proper positioning of nucleosomes at heterochromatic loci and for transcriptional gene silencing (TGS) function of the Snf2/Hdac-containing repressor complex (SHREC). The chain is Chromatin remodeling factor mit1 (mit1) from Schizosaccharomyces pombe (strain 972 / ATCC 24843) (Fission yeast).